Here is a 323-residue protein sequence, read N- to C-terminus: MPNYINYPSWLHPEVIQGIPITWYSLSYIFIILISYKFIWYQIQSDRIDIKKEDYETFMFSLVLGAILGGRLASTLVYDKSGIYYSHPWLILLPFDQDWNFTGFRGMAIHGGFLGAIIAPLITINTKLKNTNVQKYFLKLTDYGSIAFSSGYMLGRLANFANAELYGRVMKGGIIFPNAEPFDTNIPGVKEFASSVGIEILPHDLLINLPRVPSQLIEGFFEGPVTFMLLWFLFRKIKKYDGFIFGVYIMLYAFFRFFIEYLREPDKELGFIINYKPIKSLSDFSFLNISMGQILSLALMLSGLIWIIVTKKISDKKTKSILT.

A run of 3 helical transmembrane segments spans residues Val15 to Ser35, Phe58 to Tyr78, and Gly106 to Thr126. Residue Arg156 coordinates a 1,2-diacyl-sn-glycero-3-phospho-(1'-sn-glycerol). Helical transmembrane passes span Gly242–Leu262 and Ile289–Val309.

The protein belongs to the Lgt family.

It is found in the cell inner membrane. The catalysed reaction is L-cysteinyl-[prolipoprotein] + a 1,2-diacyl-sn-glycero-3-phospho-(1'-sn-glycerol) = an S-1,2-diacyl-sn-glyceryl-L-cysteinyl-[prolipoprotein] + sn-glycerol 1-phosphate + H(+). It participates in protein modification; lipoprotein biosynthesis (diacylglyceryl transfer). Functionally, catalyzes the transfer of the diacylglyceryl group from phosphatidylglycerol to the sulfhydryl group of the N-terminal cysteine of a prolipoprotein, the first step in the formation of mature lipoproteins. In Borreliella afzelii (strain PKo) (Borrelia afzelii), this protein is Phosphatidylglycerol--prolipoprotein diacylglyceryl transferase.